A 208-amino-acid polypeptide reads, in one-letter code: CASP-like protein 2U9 (208 aa).

At Met-1–Lys-27 the chain is on the cytoplasmic side. The chain crosses the membrane as a helical span at residues Ile-28 to Met-48. The Extracellular portion of the chain corresponds to Val-49 to Gly-87. Residues Ala-88–Leu-108 traverse the membrane as a helical segment. The Cytoplasmic portion of the chain corresponds to Thr-109–Ala-120. Residues Trp-121 to Val-141 traverse the membrane as a helical segment. The Extracellular portion of the chain corresponds to Ala-142–Cys-168. Residues Phe-169–Val-189 form a helical membrane-spanning segment. Topologically, residues Ala-190–Lys-208 are cytoplasmic.

It belongs to the Casparian strip membrane proteins (CASP) family. As to quaternary structure, homodimer and heterodimers.

The protein resides in the cell membrane. This Selaginella moellendorffii (Spikemoss) protein is CASP-like protein 2U9.